A 663-amino-acid polypeptide reads, in one-letter code: UvrABC system protein B (663 aa).

Positions 30–417 (DGIKAGKRHQ…TDKMVEQIIR (388 aa)) constitute a Helicase ATP-binding domain. 43 to 50 (GATGTGKT) contributes to the ATP binding site. The Beta-hairpin signature appears at 96 to 119 (YYDYYQPEAYVPSTDTFIEKDASI). A Helicase C-terminal domain is found at 434–600 (QIDDLLSEIQ…TINKKIHDLI (167 aa)). The 36-residue stretch at 627–662 (QKTIDNIEKEMKQAAKDLDFEKATELRDMLFELKAE) folds into the UVR domain.

This sequence belongs to the UvrB family. In terms of assembly, forms a heterotetramer with UvrA during the search for lesions. Interacts with UvrC in an incision complex.

Its subcellular location is the cytoplasm. Its function is as follows. The UvrABC repair system catalyzes the recognition and processing of DNA lesions. A damage recognition complex composed of 2 UvrA and 2 UvrB subunits scans DNA for abnormalities. Upon binding of the UvrA(2)B(2) complex to a putative damaged site, the DNA wraps around one UvrB monomer. DNA wrap is dependent on ATP binding by UvrB and probably causes local melting of the DNA helix, facilitating insertion of UvrB beta-hairpin between the DNA strands. Then UvrB probes one DNA strand for the presence of a lesion. If a lesion is found the UvrA subunits dissociate and the UvrB-DNA preincision complex is formed. This complex is subsequently bound by UvrC and the second UvrB is released. If no lesion is found, the DNA wraps around the other UvrB subunit that will check the other stand for damage. The polypeptide is UvrABC system protein B (Staphylococcus aureus (strain Mu50 / ATCC 700699)).